A 301-amino-acid polypeptide reads, in one-letter code: Prohibitin-2 (301 aa).

Necessary for transcriptional repression regions lie at residues 19–49 (VGTA…GQRA) and 150–174 (ASQL…RAKD). Positions 190–237 (SREYTAAVEAKQVAQQEAQRAQFLVEKAKQEQKQKIVQAEGEATAAKM) form a coiled coil.

Belongs to the prohibitin family. The mitochondrial prohibitin complex consists of two subunits (PHB1 and PHB2), assembled into a membrane-associated ring-shaped supercomplex of approximately 1 mDa.

Its subcellular location is the mitochondrion inner membrane. The protein resides in the cytoplasm. It is found in the nucleus. It localises to the cell membrane. Functionally, protein with pleiotropic attributes mediated in a cell-compartment- and tissue-specific manner, which include the plasma membrane-associated cell signaling functions, mitochondrial chaperone, and transcriptional co-regulator of transcription factors and sex steroid hormones in the nucleus. Its function is as follows. In the mitochondria, together with PHB, forms large ring complexes (prohibitin complexes) in the inner mitochondrial membrane (IMM) and functions as a chaperone protein that stabilizes mitochondrial respiratory enzymes and maintains mitochondrial integrity in the IMM, which is required for mitochondrial morphogenesis, neuronal survival, and normal lifespan. In the nucleus, serves as transcriptional co-regulator. In Gallus gallus (Chicken), this protein is Prohibitin-2 (PHB2).